The primary structure comprises 237 residues: Small ribosomal subunit protein uS3 (237 aa).

In terms of domain architecture, KH type-2 spans 17–86 (VERHLGHELK…SPQIEVQQVD (70 aa)).

Belongs to the universal ribosomal protein uS3 family. In terms of assembly, part of the 30S ribosomal subunit.

In terms of biological role, binds the lower part of the 30S subunit head. This is Small ribosomal subunit protein uS3 from Methanospirillum hungatei JF-1 (strain ATCC 27890 / DSM 864 / NBRC 100397 / JF-1).